The primary structure comprises 161 residues: MSGHGAPTIDLTTLNPEEASQLKLAIVAASWHTQIMDGLVDGALRAAKEAGIAEPTLLRVPGSFELPVAAARLAPHFDAVVALGVVIRGGTPHFDYVCQAATSGLTDVSVRTGVPVGFGVLTCDTEQQGIDRAGLPGSKEDKGHEAVTAALATAVTLKQFS.

5-amino-6-(D-ribitylamino)uracil-binding positions include tryptophan 31, 63 to 65, and 85 to 87; these read SFE and VVI. Residue 90–91 coordinates (2S)-2-hydroxy-3-oxobutyl phosphate; sequence GT. Histidine 93 (proton donor) is an active-site residue. Phenylalanine 118 is a 5-amino-6-(D-ribitylamino)uracil binding site. (2S)-2-hydroxy-3-oxobutyl phosphate is bound at residue arginine 132.

It belongs to the DMRL synthase family.

It carries out the reaction (2S)-2-hydroxy-3-oxobutyl phosphate + 5-amino-6-(D-ribitylamino)uracil = 6,7-dimethyl-8-(1-D-ribityl)lumazine + phosphate + 2 H2O + H(+). It participates in cofactor biosynthesis; riboflavin biosynthesis; riboflavin from 2-hydroxy-3-oxobutyl phosphate and 5-amino-6-(D-ribitylamino)uracil: step 1/2. Functionally, catalyzes the formation of 6,7-dimethyl-8-ribityllumazine by condensation of 5-amino-6-(D-ribitylamino)uracil with 3,4-dihydroxy-2-butanone 4-phosphate. This is the penultimate step in the biosynthesis of riboflavin. The protein is 6,7-dimethyl-8-ribityllumazine synthase of Paenarthrobacter aurescens (strain TC1).